We begin with the raw amino-acid sequence, 118 residues long: Ribosome-binding factor A (118 aa).

Belongs to the RbfA family. In terms of assembly, monomer. Binds 30S ribosomal subunits, but not 50S ribosomal subunits or 70S ribosomes.

It is found in the cytoplasm. One of several proteins that assist in the late maturation steps of the functional core of the 30S ribosomal subunit. Associates with free 30S ribosomal subunits (but not with 30S subunits that are part of 70S ribosomes or polysomes). Required for efficient processing of 16S rRNA. May interact with the 5'-terminal helix region of 16S rRNA. The sequence is that of Ribosome-binding factor A from Latilactobacillus sakei subsp. sakei (strain 23K) (Lactobacillus sakei subsp. sakei).